The primary structure comprises 505 residues: Proton-coupled zinc antiporter SLC30A1 (505 aa).

Residues 1 to 10 are Cytoplasmic-facing; that stretch reads MGCWGRNRGR. Residues 11-31 form a helical membrane-spanning segment; it reads LLCMLALTFMFMVLEVVVSRV. Topologically, residues 32 to 35 are extracellular; it reads TSSL. A helical membrane pass occupies residues 36–56; sequence AMLSDSFHMLSDVLALVVALV. Residues His-43 and Asp-47 each contribute to the Zn(2+) site. At 57 to 80 the chain is on the cytoplasmic side; sequence AERFARRTHATQKNTFGWIRAEVM. Residues 81–101 form a helical membrane-spanning segment; it reads GALVNAIFLTGLCFAILLEAI. At 102-113 the chain is on the extracellular side; the sequence is ERFVEPHEMQQP. The chain crosses the membrane as a helical span at residues 114 to 134; sequence LVVLGVGVAGLLVNVLGLCLF. Residues 135–246 lie on the Cytoplasmic side of the membrane; it reads HHHSGFSQDS…RAGQLNMRGV (112 aa). Positions 142–215 are disordered; that stretch reads QDSGHSHSHG…DPEKPRSGDT (74 aa). Positions 187 to 199 are enriched in polar residues; sequence TNTLVANTSNSNG. Basic and acidic residues predominate over residues 203 to 214; it reads DPADPEKPRSGD. A helical membrane pass occupies residues 247–267; the sequence is FLHVLGDALGSVIVVVNALVF. Zn(2+) is bound by residues His-249 and Asp-253. The Extracellular segment spans residues 268–306; the sequence is YFSWKGCSEGDFCVNPCFPDPCKAFVEIINSTHASVYEA. A glycan (N-linked (GlcNAc...) asparagine) is linked at Asn-297. The helical transmembrane segment at 307 to 327 threads the bilayer; it reads GPCWVLYLDPTLCVVMVCILL. Residues 328-505 lie on the Cytoplasmic side of the membrane; it reads YTTYPLLKES…MPNKQPESSL (178 aa). Phosphoserine is present on Ser-504.

It belongs to the cation diffusion facilitator (CDF) transporter (TC 2.A.4) family. SLC30A subfamily. Homodimer. Interacts with TMEM163. Interacts and forms a complex with TMC6 and TMC8; the interaction regulates zinc transport into the ER.

The protein resides in the cell membrane. It localises to the basolateral cell membrane. It is found in the cytoplasmic vesicle membrane. The protein localises to the cytoplasm. Its subcellular location is the endoplasmic reticulum membrane. The protein resides in the golgi apparatus membrane. It localises to the nucleus membrane. It catalyses the reaction Zn(2+)(in) + 2 H(+)(out) = Zn(2+)(out) + 2 H(+)(in). In terms of biological role, zinc ion:proton antiporter that could function at the plasma membrane mediating zinc efflux from cells against its electrochemical gradient protecting them from intracellular zinc accumulation and toxicity. Alternatively, could prevent the transport to the plasma membrane of CACNB2, the L-type calcium channels regulatory subunit, through a yet to be defined mechanism. By modulating the expression of these channels at the plasma membrane, could prevent calcium and zinc influx into cells. By the same mechanism, could also prevent L-type calcium channels-mediated heavy metal influx into cells. In some cells, could also function as a zinc ion:proton antiporter mediating zinc entry into the lumen of cytoplasmic vesicles. In macrophages, can increase zinc ions concentration into the lumen of cytoplasmic vesicles containing engulfed bacteria and could help inactivate them. Forms a complex with TMC6/EVER1 and TMC8/EVER2 at the ER membrane of keratynocytes which facilitates zinc uptake into the ER. Down-regulates the activity of transcription factors induced by zinc and cytokines. The protein is Proton-coupled zinc antiporter SLC30A1 of Macaca fascicularis (Crab-eating macaque).